A 157-amino-acid polypeptide reads, in one-letter code: MAKKPDTASRIADNKKAAYNYFFEERFEAGLVLEGWEVKSLREGKVQITDGYVVIRNGELFVIGLQINPLGTASTHISPDKQRTKKLLMHKEEIKRLIGKVEQKGYTLVPLNLHWKAGKIKCEIALAKGKAEHDKRDTIKDREGKREVERAMKTNHR.

The segment at 135-157 (KRDTIKDREGKREVERAMKTNHR) is disordered.

The protein belongs to the SmpB family.

It is found in the cytoplasm. Required for rescue of stalled ribosomes mediated by trans-translation. Binds to transfer-messenger RNA (tmRNA), required for stable association of tmRNA with ribosomes. tmRNA and SmpB together mimic tRNA shape, replacing the anticodon stem-loop with SmpB. tmRNA is encoded by the ssrA gene; the 2 termini fold to resemble tRNA(Ala) and it encodes a 'tag peptide', a short internal open reading frame. During trans-translation Ala-aminoacylated tmRNA acts like a tRNA, entering the A-site of stalled ribosomes, displacing the stalled mRNA. The ribosome then switches to translate the ORF on the tmRNA; the nascent peptide is terminated with the 'tag peptide' encoded by the tmRNA and targeted for degradation. The ribosome is freed to recommence translation, which seems to be the essential function of trans-translation. This chain is SsrA-binding protein, found in Albidiferax ferrireducens (strain ATCC BAA-621 / DSM 15236 / T118) (Rhodoferax ferrireducens).